We begin with the raw amino-acid sequence, 218 residues long: Protein-L-isoaspartate O-methyltransferase (218 aa).

Serine 60 is an active-site residue.

It belongs to the methyltransferase superfamily. L-isoaspartyl/D-aspartyl protein methyltransferase family.

Its subcellular location is the cytoplasm. It catalyses the reaction [protein]-L-isoaspartate + S-adenosyl-L-methionine = [protein]-L-isoaspartate alpha-methyl ester + S-adenosyl-L-homocysteine. In terms of biological role, catalyzes the methyl esterification of L-isoaspartyl residues in peptides and proteins that result from spontaneous decomposition of normal L-aspartyl and L-asparaginyl residues. It plays a role in the repair and/or degradation of damaged proteins. The sequence is that of Protein-L-isoaspartate O-methyltransferase from Roseiflexus castenholzii (strain DSM 13941 / HLO8).